We begin with the raw amino-acid sequence, 151 residues long: Globin CTT-IIIA (151 aa).

Residues 8-147 enclose the Globin domain; sequence SMTDAQVAAV…MFHVIFNALD (140 aa). His-98 provides a ligand contact to heme b.

The protein belongs to the globin family. As to quaternary structure, monomer.

This chain is Globin CTT-IIIA, found in Chironomus thummi thummi (Midge).